The chain runs to 647 residues: DNA mismatch repair protein MutL (647 aa).

Belongs to the DNA mismatch repair MutL/HexB family.

In terms of biological role, this protein is involved in the repair of mismatches in DNA. It is required for dam-dependent methyl-directed DNA mismatch repair. May act as a 'molecular matchmaker', a protein that promotes the formation of a stable complex between two or more DNA-binding proteins in an ATP-dependent manner without itself being part of a final effector complex. This Bacillus cereus (strain ATCC 10987 / NRS 248) protein is DNA mismatch repair protein MutL.